A 511-amino-acid chain; its full sequence is 4,4'-diapophytoene desaturase (4,4'-diapolycopene-forming) (511 aa).

The protein belongs to the carotenoid/retinoid oxidoreductase family.

The catalysed reaction is 15-cis-4,4'-diapophytoene + 4 FAD + 4 H(+) = all-trans-4,4'-diapolycopene + 4 FADH2. It functions in the pathway carotenoid biosynthesis. Functionally, involved in the biosynthesis of C30 carotenoids. Catalyzes four successive dehydrogenation reactions that lead to the introduction of four double bonds into 4,4'-diapophytoene (dehydrosqualene) to yield 4,4'-diapolycopene. This Methylomonas sp protein is 4,4'-diapophytoene desaturase (4,4'-diapolycopene-forming).